Consider the following 334-residue polypeptide: Holliday junction branch migration complex subunit RuvB (334 aa).

The tract at residues 4-184 (ADRLIQPQLQ…FGIPLRLEFY (181 aa)) is large ATPase domain (RuvB-L). ATP-binding positions include Arg-24, Gly-65, Lys-68, Thr-69, Thr-70, 131-133 (EDY), Arg-174, Tyr-184, and Arg-221. Residue Thr-69 coordinates Mg(2+). The interval 185 to 255 (NIKDLSTIVT…VADHALDLLD (71 aa)) is small ATPAse domain (RuvB-S). Residues 258–334 (NEGFDYMDRK…YQHFQLIKPE (77 aa)) are head domain (RuvB-H). DNA contacts are provided by Arg-294, Arg-313, and Arg-318.

Belongs to the RuvB family. As to quaternary structure, homohexamer. Forms an RuvA(8)-RuvB(12)-Holliday junction (HJ) complex. HJ DNA is sandwiched between 2 RuvA tetramers; dsDNA enters through RuvA and exits via RuvB. An RuvB hexamer assembles on each DNA strand where it exits the tetramer. Each RuvB hexamer is contacted by two RuvA subunits (via domain III) on 2 adjacent RuvB subunits; this complex drives branch migration. In the full resolvosome a probable DNA-RuvA(4)-RuvB(12)-RuvC(2) complex forms which resolves the HJ.

It localises to the cytoplasm. The enzyme catalyses ATP + H2O = ADP + phosphate + H(+). Functionally, the RuvA-RuvB-RuvC complex processes Holliday junction (HJ) DNA during genetic recombination and DNA repair, while the RuvA-RuvB complex plays an important role in the rescue of blocked DNA replication forks via replication fork reversal (RFR). RuvA specifically binds to HJ cruciform DNA, conferring on it an open structure. The RuvB hexamer acts as an ATP-dependent pump, pulling dsDNA into and through the RuvAB complex. RuvB forms 2 homohexamers on either side of HJ DNA bound by 1 or 2 RuvA tetramers; 4 subunits per hexamer contact DNA at a time. Coordinated motions by a converter formed by DNA-disengaged RuvB subunits stimulates ATP hydrolysis and nucleotide exchange. Immobilization of the converter enables RuvB to convert the ATP-contained energy into a lever motion, pulling 2 nucleotides of DNA out of the RuvA tetramer per ATP hydrolyzed, thus driving DNA branch migration. The RuvB motors rotate together with the DNA substrate, which together with the progressing nucleotide cycle form the mechanistic basis for DNA recombination by continuous HJ branch migration. Branch migration allows RuvC to scan DNA until it finds its consensus sequence, where it cleaves and resolves cruciform DNA. In Shewanella putrefaciens (strain CN-32 / ATCC BAA-453), this protein is Holliday junction branch migration complex subunit RuvB.